We begin with the raw amino-acid sequence, 493 residues long: Solute carrier family 2, facilitated glucose transporter member 3 (493 aa).

Topologically, residues Met-1–Leu-10 are cytoplasmic. A helical membrane pass occupies residues Val-11–Asn-32. Topologically, residues Ala-33–Ser-64 are extracellular. N-linked (GlcNAc...) asparagine glycosylation occurs at Asn-43. The helical transmembrane segment at Leu-65 to Val-85 threads the bilayer. At Asn-86 to Arg-90 the chain is on the cytoplasmic side. Residues Arg-91–Ala-111 traverse the membrane as a helical segment. Over Lys-112–Glu-118 the chain is Extracellular. Residues Met-119–Ile-142 traverse the membrane as a helical segment. The Cytoplasmic portion of the chain corresponds to Gly-143–Ala-153. The helical transmembrane segment at Phe-154–Leu-174 threads the bilayer. Residue Gln-159 coordinates D-glucose. Over Asp-175–Leu-183 the chain is Extracellular. Residues Trp-184 to Phe-204 traverse the membrane as a helical segment. Residues Cys-205–Pro-269 are Cytoplasmic-facing. Thr-232 carries the post-translational modification Phosphothreonine. A helical membrane pass occupies residues Leu-270 to Tyr-290. Residues Gln-277–Ser-279 form an important for selectivity against fructose region. Residues Gln-280 to Gln-281 and Asn-286 each bind D-glucose. At Tyr-291–Pro-304 the chain is on the extracellular side. Residues Ile-305–Leu-325 form a helical membrane-spanning segment. A D-glucose-binding site is contributed by Asn-315. The Cytoplasmic portion of the chain corresponds to Val-326 to Arg-331. A helical transmembrane segment spans residues Arg-332–Ser-352. Over Leu-353–Ser-363 the chain is Extracellular. Residues Phe-364–Val-389 traverse the membrane as a helical segment. Residues Glu-378 and Trp-386 each contribute to the D-glucose site. Topologically, residues Ala-390 to Pro-399 are cytoplasmic. A helical transmembrane segment spans residues Ala-400–Phe-420. Over Pro-421–Ala-429 the chain is Extracellular. The chain crosses the membrane as a helical span at residues Tyr-430–Val-450. Topologically, residues Pro-451–Ala-493 are cytoplasmic. A phosphoserine mark is found at Ser-471, Ser-475, and Ser-482. At Thr-489 the chain carries Phosphothreonine.

The protein belongs to the major facilitator superfamily. Sugar transporter (TC 2.A.1.1) family. Glucose transporter subfamily. In terms of assembly, interacts with SMIM43; the interaction may promote SLC2A3-mediated glucose transport to meet the energy needs of mesendoderm differentiation. In terms of tissue distribution, brain and osteoblastic cells (at protein level). Highly expressed in brain.

Its subcellular location is the cell membrane. The protein resides in the perikaryon. It localises to the cell projection. It catalyses the reaction D-glucose(out) = D-glucose(in). The enzyme catalyses D-galactose(in) = D-galactose(out). Deoxyglucose transport is inhibited by D-glucose, D-galactose and maltose. Galactose transport is inhibited by D-glucose and maltose. In terms of biological role, facilitative glucose transporter. Can also mediate the uptake of various other monosaccharides across the cell membrane. Mediates the uptake of glucose, 2-deoxyglucose, galactose, mannose, xylose and fucose, and probably also dehydroascorbate. Does not mediate fructose transport. Required for mesendoderm differentiation. This Rattus norvegicus (Rat) protein is Solute carrier family 2, facilitated glucose transporter member 3.